Here is a 486-residue protein sequence, read N- to C-terminus: Hexokinase-2 (486 aa).

A Phosphoserine modification is found at S15. Positions K21 to A469 constitute a Hexokinase domain. The residue at position 38 (T38) is a Phosphothreonine. Residues T75–I209 are hexokinase small subdomain. Residues D86–N91 and K111 each bind ATP. Phosphoserine is present on S158. Substrate is bound by residues S158, T175 to K176, N210 to D211, and N237. Residues N210–D458 are hexokinase large subdomain. S245 carries the phosphoserine modification. Substrate is bound at residue E269. A Phosphoserine modification is found at S272. E302 is a binding site for substrate. Residues G307–Y308, T344–A348, and S419–R423 each bind ATP.

It belongs to the hexokinase family. As to quaternary structure, homodimer.

It carries out the reaction a D-hexose + ATP = a D-hexose 6-phosphate + ADP + H(+). The enzyme catalyses D-fructose + ATP = D-fructose 6-phosphate + ADP + H(+). It catalyses the reaction D-glucose + ATP = D-glucose 6-phosphate + ADP + H(+). The protein operates within carbohydrate metabolism; hexose metabolism. It participates in carbohydrate degradation; glycolysis; D-glyceraldehyde 3-phosphate and glycerone phosphate from D-glucose: step 1/4. Subject to allosteric control. Substrate inhibition by ATP. Functionally, catalyzes the phosphorylation of hexose, such as D-glucose and D-fructose, to hexose 6-phosphate (D-glucose 6-phosphate and D-fructose 6-phosphate, respectively). Mediates the initial step of glycolysis by catalyzing phosphorylation of D-glucose to D-glucose 6-phosphate. The chain is Hexokinase-2 (HXK2) from Saccharomyces cerevisiae (strain ATCC 204508 / S288c) (Baker's yeast).